The sequence spans 229 residues: Enolase-phosphatase E1 (229 aa).

The protein belongs to the HAD-like hydrolase superfamily. MasA/MtnC family. As to quaternary structure, monomer. The cofactor is Mg(2+).

The catalysed reaction is 5-methylsulfanyl-2,3-dioxopentyl phosphate + H2O = 1,2-dihydroxy-5-(methylsulfanyl)pent-1-en-3-one + phosphate. The protein operates within amino-acid biosynthesis; L-methionine biosynthesis via salvage pathway; L-methionine from S-methyl-5-thio-alpha-D-ribose 1-phosphate: step 3/6. It functions in the pathway amino-acid biosynthesis; L-methionine biosynthesis via salvage pathway; L-methionine from S-methyl-5-thio-alpha-D-ribose 1-phosphate: step 4/6. Functionally, bifunctional enzyme that catalyzes the enolization of 2,3-diketo-5-methylthiopentyl-1-phosphate (DK-MTP-1-P) into the intermediate 2-hydroxy-3-keto-5-methylthiopentenyl-1-phosphate (HK-MTPenyl-1-P), which is then dephosphorylated to form the acireductone 1,2-dihydroxy-3-keto-5-methylthiopentene (DHK-MTPene). In Citrobacter koseri (strain ATCC BAA-895 / CDC 4225-83 / SGSC4696), this protein is Enolase-phosphatase E1.